We begin with the raw amino-acid sequence, 404 residues long: Iron-sulfur assembly protein IscA2 (404 aa).

Residues 244–289 (KEEDEKKLDKLLKKRNIKKRDIVTITEEAKEELKKIISINKKENNN) adopt a coiled-coil conformation.

The protein belongs to the HesB/IscA family. As to quaternary structure, dimer. Homotetramer. Interacts with ABCB6.

It localises to the mitochondrion. The protein operates within cofactor biosynthesis; iron-sulfur cluster biosynthesis. Functionally, participates in iron-sulfur cluster formation (ISC) pathway for iron-sulfur (Fe-S) cluster biogenesis. Can bind and transfer [4Fe-4S] clusters to target apo-proteins. This is Iron-sulfur assembly protein IscA2 from Plasmodium falciparum (isolate 3D7).